A 102-amino-acid polypeptide reads, in one-letter code: MSELKIRDPRDIILAPVVSEKSYGLLDQNTYTFVVKPTANKTEIKIAIEQIFGVKVTSVNTMNRKGKVRRTRTGVGKRPDTKRAIVTVAEGDRIDIFTGPVA.

It belongs to the universal ribosomal protein uL23 family. Part of the 50S ribosomal subunit. Contacts protein L29, and trigger factor when it is bound to the ribosome.

In terms of biological role, one of the early assembly proteins it binds 23S rRNA. One of the proteins that surrounds the polypeptide exit tunnel on the outside of the ribosome. Forms the main docking site for trigger factor binding to the ribosome. This chain is Large ribosomal subunit protein uL23, found in Cutibacterium acnes (strain DSM 16379 / KPA171202) (Propionibacterium acnes).